The chain runs to 599 residues: ATP-dependent rRNA helicase SPB4 (599 aa).

Positions 7-35 (WDTLDYTLQPWIRTAVDAMGYETMTPVQA) match the Q motif motif. Positions 38–224 (IPLFARNKDV…KTGMRNPVKV (187 aa)) constitute a Helicase ATP-binding domain. 51–58 (SVTGSGKT) provides a ligand contact to ATP. The short motif at 172 to 175 (DEAD) is the DEAD box element. The 168-residue stretch at 248–415 (KLQLLLTLLN…GLPEIIRAWI (168 aa)) folds into the Helicase C-terminal domain. Residues 501-561 (QREKARKLAK…LKRKAIEEKL (61 aa)) adopt a coiled-coil conformation. Residues 559 to 599 (EKLIENSDDSDNEVETDWKDIVRQRKKKKTNSGMQGDFGDL) form a disordered region. Over residues 564-573 (NSDDSDNEVE) the composition is skewed to acidic residues.

Belongs to the DEAD box helicase family. DDX55/SPB4 subfamily. Component of pre-60S ribosomal complexes.

It localises to the nucleus. The protein resides in the nucleolus. It catalyses the reaction ATP + H2O = ADP + phosphate + H(+). ATP-binding RNA helicase involved in the biogenesis of 60S ribosomal subunits. Binds 90S pre-ribosomal particles and dissociates from pre-60S ribosomal particles after processing of 27SB pre-rRNA. Required for the normal formation of 18S rRNA through the processing of pre-rRNAs at sites A0, A1 and A2, and the normal formation of 25S and 5.8S rRNAs through the processing of pre-rRNAs at sites C1 and C2. The sequence is that of ATP-dependent rRNA helicase SPB4 from Eremothecium gossypii (strain ATCC 10895 / CBS 109.51 / FGSC 9923 / NRRL Y-1056) (Yeast).